The primary structure comprises 172 residues: Scytalone dehydratase-like protein Arp1 (172 aa).

Tyrosine 49 provides a ligand contact to substrate. Active-site residues include histidine 84 and histidine 109. Asparagine 130 is a substrate binding site.

It belongs to the scytalone dehydratase family. Homotrimer. Each subunit contains an active site, located in the central part of the hydrophobic core of the monomer, which functions independently.

Functionally, scytalone dehydratase-like protein; part of the Pks2 gene cluster that mediates the formation of infectious structures (appressoria), enabling these fungi to kill insects faster. The product of the Pks2 gene cluster is different from the one of Pks1 and has still not been identified. The chain is Scytalone dehydratase-like protein Arp1 from Metarhizium guizhouense (strain ARSEF 977).